The following is a 142-amino-acid chain: Putative arsenate reductase (142 aa).

Belongs to the low molecular weight phosphotyrosine protein phosphatase family.

Functionally, reduces arsenate [As(V)] to arsenite [As(III)]. The sequence is that of Putative arsenate reductase (arsC) from Halobacterium salinarum (strain ATCC 700922 / JCM 11081 / NRC-1) (Halobacterium halobium).